A 246-amino-acid polypeptide reads, in one-letter code: 1-(5-phosphoribosyl)-5-[(5-phosphoribosylamino)methylideneamino] imidazole-4-carboxamide isomerase (246 aa).

The active-site Proton acceptor is Asp-10. Asp-131 functions as the Proton donor in the catalytic mechanism.

The protein belongs to the HisA/HisF family.

The protein localises to the cytoplasm. It catalyses the reaction 1-(5-phospho-beta-D-ribosyl)-5-[(5-phospho-beta-D-ribosylamino)methylideneamino]imidazole-4-carboxamide = 5-[(5-phospho-1-deoxy-D-ribulos-1-ylimino)methylamino]-1-(5-phospho-beta-D-ribosyl)imidazole-4-carboxamide. Its pathway is amino-acid biosynthesis; L-histidine biosynthesis; L-histidine from 5-phospho-alpha-D-ribose 1-diphosphate: step 4/9. The polypeptide is 1-(5-phosphoribosyl)-5-[(5-phosphoribosylamino)methylideneamino] imidazole-4-carboxamide isomerase (Acidiphilium cryptum (strain JF-5)).